The sequence spans 1252 residues: Protein ITPRID2 (1252 aa).

The tract at residues 28–70 (CRSSWQASETEDLSTETTTQDEDEDDEEDLPGTKLPAPAGRGN) is disordered. Acidic residues predominate over residues 36–57 (ETEDLSTETTTQDEDEDDEEDL). T85 is modified (phosphothreonine). 5 positions are modified to phosphoserine: S90, S109, S207, S268, and S328. Disordered stretches follow at residues 306 to 483 (DKTE…HVPA), 552 to 575 (HVTP…APLQ), and 595 to 636 (FPQC…GELP). Positions 357-372 (TVTEEVSGSSSTVTDS) are enriched in low complexity. Composition is skewed to basic and acidic residues over residues 395–407 (SREA…DPLR) and 415–428 (DLGH…HCEL). Over residues 429–441 (ESSSELKSAQASS) the composition is skewed to low complexity. Position 465 is a phosphoserine (S465). A phosphoserine mark is found at S643, S667, S736, S738, S745, S758, and S766. K807 participates in a covalent cross-link: Glycyl lysine isopeptide (Lys-Gly) (interchain with G-Cter in SUMO2). Residues S866 and S898 each carry the phosphoserine modification. Residues 955–1031 (QELQVVRRSL…LLGLDEQLRA (77 aa)) are a coiled coil. A phosphoserine mark is found at S1036, S1051, S1056, S1059, and S1114. Disordered regions lie at residues 1095–1131 (GESS…GSKP) and 1147–1180 (ALTP…ASPV). Residues 1103–1117 (SQATSESSSVCSSPS) are compositionally biased toward low complexity. Phosphothreonine is present on T1149. Polar residues predominate over residues 1151–1161 (TAPSRTGSVQT). S1154 bears the Phosphoserine mark. T1161 is subject to Phosphothreonine.

It is found in the cytoplasm. The protein is Protein ITPRID2 (Itprid2) of Mus musculus (Mouse).